The chain runs to 278 residues: Elongation factor Ts (278 aa).

An involved in Mg(2+) ion dislocation from EF-Tu region spans residues 80–83; it reads TDFV.

Belongs to the EF-Ts family.

It is found in the cytoplasm. Associates with the EF-Tu.GDP complex and induces the exchange of GDP to GTP. It remains bound to the aminoacyl-tRNA.EF-Tu.GTP complex up to the GTP hydrolysis stage on the ribosome. The polypeptide is Elongation factor Ts (Micrococcus luteus (strain ATCC 4698 / DSM 20030 / JCM 1464 / CCM 169 / CCUG 5858 / IAM 1056 / NBRC 3333 / NCIMB 9278 / NCTC 2665 / VKM Ac-2230) (Micrococcus lysodeikticus)).